The chain runs to 558 residues: Energy-dependent translational throttle protein EttA (558 aa).

ABC transporter domains lie at 6–256 (YTMK…AVQG) and 322–552 (VEVD…RVTH). Residue 38 to 45 (GPNGAGKS) participates in ATP binding. The segment at 94–136 (GDIKIKLDRFNEVAELMATDYTDELMEEMGRLQEELDHADAWD) is arm. The interval 239-320 (GNYSTYLEKK…IPVGPRLGNV (82 aa)) is ptIM. Residue 354–361 (GPNGVGKT) participates in ATP binding.

It belongs to the ABC transporter superfamily. ABCF family. Translational throttle EttA subfamily. Monomer. Probably contacts ribosomal proteins L1, L5, L33 and S7, the 16S and 23S rRNA and the P-site containing tRNA(fMet).

The protein localises to the cytoplasm. The enzyme catalyses ATP + H2O = ADP + phosphate + H(+). In terms of biological role, a translation factor that gates the progression of the 70S ribosomal initiation complex (IC, containing tRNA(fMet) in the P-site) into the translation elongation cycle by using a mechanism sensitive to the ATP/ADP ratio. Binds to the 70S ribosome E-site where it modulates the state of the translating ribosome during subunit translocation. ATP hydrolysis probably frees it from the ribosome, which can enter the elongation phase. This chain is Energy-dependent translational throttle protein EttA, found in Mycobacterium tuberculosis (strain CDC 1551 / Oshkosh).